The chain runs to 432 residues: Tyrosine-protein phosphatase non-receptor type 1 (432 aa).

The residue at position 1 (M1) is an N-acetylmethionine. The Tyrosine-protein phosphatase domain maps to 3–277; sequence MEKEFEQIDK…RFSYLAVIEG (275 aa). Y20 is modified (phosphotyrosine). S50 carries the phosphoserine; by PKB/AKT1, CLK1 and CLK2 modification. Phosphotyrosine; by EGFR is present on Y66. Substrate is bound by residues D181 and 215 to 221; that span reads CSAGIGR. C215 serves as the catalytic Phosphocysteine intermediate. C215 bears the Cysteine persulfide mark. C215 bears the S-nitrosocysteine; in reversibly inhibited form mark. S242 and S243 each carry phosphoserine; by CLK1 and CLK2. Position 262 (Q262) interacts with substrate. The interval 297–322 is disordered; sequence EDLEPPPEHVPPPPRPPKRTLEPHNG. S335, S362, and S364 each carry phosphoserine. The disordered stretch occupies residues 350–402; that stretch reads SRAPSIAVHSMSSMSQDTEVRKRMVGGGLQSAQASVPTEEELSPTEEEQKAHR. Phosphothreonine is present on T367.

This sequence belongs to the protein-tyrosine phosphatase family. Non-receptor class 1 subfamily. As to quaternary structure, interacts with EPHA3 (phosphorylated); dephosphorylates EPHA3 and may regulate its trafficking and function. Interacts with MET. Interacts with NCK1. Ser-50 is the major site of phosphorylation as compared to Ser-242 and Ser-243. Activated by phosphorylation at Ser-50. Post-translationally, S-nitrosylation of Cys-215 inactivates the enzyme activity. In terms of processing, sulfhydration at Cys-215 following endoplasmic reticulum stress inactivates the enzyme activity, promoting EIF2AK3/PERK activity. As to expression, found in several tissues including central nervous system, liver and kidney. A high level of expression was found in the hippocampus.

The protein resides in the endoplasmic reticulum membrane. The catalysed reaction is O-phospho-L-tyrosyl-[protein] + H2O = L-tyrosyl-[protein] + phosphate. Tyrosine-protein phosphatase which acts as a regulator of endoplasmic reticulum unfolded protein response. Mediates dephosphorylation of EIF2AK3/PERK; inactivating the protein kinase activity of EIF2AK3/PERK. May play an important role in CKII- and p60c-src-induced signal transduction cascades. May regulate the EFNA5-EPHA3 signaling pathway which modulates cell reorganization and cell-cell repulsion. May also regulate the hepatocyte growth factor receptor signaling pathway through dephosphorylation of MET. This chain is Tyrosine-protein phosphatase non-receptor type 1 (Ptpn1), found in Rattus norvegicus (Rat).